The primary structure comprises 150 residues: Endoribonuclease YbeY (150 aa).

His-112, His-116, and His-122 together coordinate Zn(2+).

This sequence belongs to the endoribonuclease YbeY family. It depends on Zn(2+) as a cofactor.

The protein resides in the cytoplasm. Its function is as follows. Single strand-specific metallo-endoribonuclease involved in late-stage 70S ribosome quality control and in maturation of the 3' terminus of the 16S rRNA. In Bdellovibrio bacteriovorus (strain ATCC 15356 / DSM 50701 / NCIMB 9529 / HD100), this protein is Endoribonuclease YbeY.